The primary structure comprises 392 residues: uncharacterized protein (392 aa).

A mitochondrion-targeting transit peptide spans 1 to 34 (MCISSSSLLCGINSLKYASNRVGILIPPFQTASS). Helical transmembrane passes span 115–135 (VAIMVAVIVCLVNGVVFWHWD), 150–172 (FRFMMTHAQASLFNLYEGRWWTL), 185–205 (LLVNCVAIYSFLSIVVYKFGV), 208–225 (ALSVYLGAGVFGNYVALQ), 277–297 (ATFVPQSWATGLLGASGAVYA), 299–319 (AAIFACLFPYTEFFLFFVYPV), 321–341 (AGIFMPLDFIAEYVLCLLNYE), and 350–370 (AHVSGTFFGVVSSLFLLPAMW). Catalysis depends on Ser-292, which acts as the Nucleophile. His-351 is an active-site residue.

The protein belongs to the peptidase S54 family.

It localises to the mitochondrion inner membrane. This is an uncharacterized protein from Schizosaccharomyces pombe (strain 972 / ATCC 24843) (Fission yeast).